Consider the following 58-residue polypeptide: Isocitrate lyase (58 aa).

Belongs to the isocitrate lyase/PEP mutase superfamily. Isocitrate lyase family. In terms of assembly, homotetramer. It depends on Mg(2+) as a cofactor.

The protein localises to the glyoxysome. It carries out the reaction D-threo-isocitrate = glyoxylate + succinate. Its pathway is carbohydrate metabolism; glyoxylate cycle; (S)-malate from isocitrate: step 1/2. Involved in storage lipid mobilization during the growth of higher plant seedling. This is Isocitrate lyase from Helianthus annuus (Common sunflower).